The chain runs to 335 residues: Phosphate acyltransferase (335 aa).

The protein belongs to the PlsX family. In terms of assembly, homodimer. Probably interacts with PlsY.

It is found in the cytoplasm. The enzyme catalyses a fatty acyl-[ACP] + phosphate = an acyl phosphate + holo-[ACP]. It functions in the pathway lipid metabolism; phospholipid metabolism. Functionally, catalyzes the reversible formation of acyl-phosphate (acyl-PO(4)) from acyl-[acyl-carrier-protein] (acyl-ACP). This enzyme utilizes acyl-ACP as fatty acyl donor, but not acyl-CoA. This chain is Phosphate acyltransferase, found in Brevibacillus brevis (strain 47 / JCM 6285 / NBRC 100599).